Reading from the N-terminus, the 381-residue chain is Creatine kinase B-type (381 aa).

Phosphoserine is present on Ser-4. Residues 11–98 (KLRFPAEDEF…FDPIIEDRHG (88 aa)) enclose the Phosphagen kinase N-terminal domain. Thr-35 is subject to Phosphothreonine. Residue Lys-45 forms a Glycyl lysine isopeptide (Lys-Gly) (interchain with G-Cter in ubiquitin) linkage. Val-72 provides a ligand contact to creatine. Positions 96-110 (RHGGYKPSDEHKTDL) are enriched in basic and acidic residues. Residues 96–122 (RHGGYKPSDEHKTDLNPDNLQGGDDLD) are disordered. Residues Lys-101 and Lys-107 each participate in a glycyl lysine isopeptide (Lys-Gly) (interchain with G-Cter in ubiquitin) cross-link. Tyr-125 is modified (phosphotyrosine). The Phosphagen kinase C-terminal domain maps to 125–367 (YVLSSRVRTG…KLLIEMEQRL (243 aa)). ATP-binding positions include 128–132 (SSRVR), Arg-130, Arg-132, and His-191. Residues 130 to 138 (RVRTGRSIR) form an internal MTS-like signal region. Position 199 is a phosphoserine (Ser-199). Creatine is bound at residue Glu-232. Residue Arg-236 participates in ATP binding. The residue at position 269 (Tyr-269) is a 3'-nitrotyrosine. Ser-285 provides a ligand contact to creatine. Arg-292 contacts ATP. The residue at position 309 (Ser-309) is a Phosphoserine. ATP-binding positions include Arg-320, 320–325 (RGTGGV), and Asp-335. Phosphothreonine is present on Thr-322. Lys-381 participates in a covalent cross-link: Glycyl lysine isopeptide (Lys-Gly) (interchain with G-Cter in ubiquitin).

It belongs to the ATP:guanido phosphotransferase family. In terms of assembly, dimer of identical or non-identical chains, which can be either B (brain type) or M (muscle type). With MM being the major form in skeletal muscle and myocardium, MB existing in myocardium, and BB existing in many tissues, especially brain. Interacts with SLC12A6 (via C-terminus); the interaction may be required for SLC12A6 potassium-chloride cotransport activity. Post-translationally, ubiquitinated by the ECS(ASB9) complex, leading to its degradation by the proteasome.

It is found in the cytoplasm. The protein resides in the cytosol. It localises to the mitochondrion. Its subcellular location is the cell membrane. It carries out the reaction creatine + ATP = N-phosphocreatine + ADP + H(+). Functionally, reversibly catalyzes the transfer of phosphate between ATP and various phosphogens (e.g. creatine phosphate). Creatine kinase isoenzymes play a central role in energy transduction in tissues with large, fluctuating energy demands, such as skeletal muscle, heart, brain and spermatozoa. Acts as a key regulator of adaptive thermogenesis as part of the futile creatine cycle: localizes to the mitochondria of thermogenic fat cells and acts by mediating phosphorylation of creatine to initiate a futile cycle of creatine phosphorylation and dephosphorylation. During the futile creatine cycle, creatine and N-phosphocreatine are in a futile cycle, which dissipates the high energy charge of N-phosphocreatine as heat without performing any mechanical or chemical work. This chain is Creatine kinase B-type, found in Homo sapiens (Human).